The sequence spans 501 residues: Glycerol kinase (501 aa).

Threonine 17 is an ADP binding site. Positions 17, 18, and 19 each coordinate ATP. Residue threonine 17 coordinates sn-glycerol 3-phosphate. Arginine 21 is an ADP binding site. Arginine 87, glutamate 88, tyrosine 139, and aspartate 243 together coordinate sn-glycerol 3-phosphate. Glycerol is bound by residues arginine 87, glutamate 88, tyrosine 139, aspartate 243, and glutamine 244. Threonine 265 and glycine 308 together coordinate ADP. ATP is bound by residues threonine 265, glycine 308, glutamine 312, and glycine 409. Residues glycine 409 and asparagine 413 each coordinate ADP.

It belongs to the FGGY kinase family.

It catalyses the reaction glycerol + ATP = sn-glycerol 3-phosphate + ADP + H(+). It functions in the pathway polyol metabolism; glycerol degradation via glycerol kinase pathway; sn-glycerol 3-phosphate from glycerol: step 1/1. With respect to regulation, inhibited by fructose 1,6-bisphosphate (FBP). Key enzyme in the regulation of glycerol uptake and metabolism. Catalyzes the phosphorylation of glycerol to yield sn-glycerol 3-phosphate. The protein is Glycerol kinase of Pseudomonas fluorescens (strain SBW25).